Here is a 200-residue protein sequence, read N- to C-terminus: uncharacterized protein (200 aa).

Disordered regions lie at residues M1 to T27, I42 to A79, and H169 to R200. The segment covering R187 to R200 has biased composition (basic and acidic residues).

This is an uncharacterized protein from Shigella flexneri.